Here is a 2195-residue protein sequence, read N- to C-terminus: Activating signal cointegrator 1 complex subunit 3 (2195 aa).

Positions 31–88 form a coiled coil; that stretch reads EQVVARNKEIMKKRNEKKKEKDRIIEKGQLTWSYFSDSKQNKEKEKENRQIFNKFKEI. Residues 367-378 are compositionally biased toward basic and acidic residues; it reads QLKKDDKKRYKN. The segment at 367–387 is disordered; the sequence is QLKKDDKKRYKNDQQQQQQQQ. Residues 492-675 form the Helicase ATP-binding 1 domain; sequence ESAYKSNENI…FIRAPASGTH (184 aa). Position 505–512 (505–512) interacts with ATP; the sequence is APTGAGKT. Positions 617 to 620 match the DEAH box motif; the sequence is DEIH. In terms of domain architecture, Helicase C-terminal 1 spans 705 to 920; it reads NMNQLCYERL…NVNEAVNWLS (216 aa). One can recognise an SEC63 1 domain in the interval 980-1286; that stretch reads MTELGRIASH…GSEGIREISF (307 aa). A Helicase ATP-binding 2 domain is found at 1336–1511; the sequence is HTLYYTNNNV…WMGIDRVGLF (176 aa). Residue 1349-1356 participates in ATP binding; the sequence is SPTGSGKT. Positions 1453-1456 match the DEAH box motif; sequence DEIH. The 206-residue stretch at 1545-1750 folds into the Helicase C-terminal 2 domain; that stretch reads SFAAIATYSP…GTIQSKQGAI (206 aa). Positions 1810–1969 constitute an SEC63 2 domain; the sequence is PMSMGKIASF…LPHINKDFAD (160 aa). Positions 2032-2062 are enriched in low complexity; the sequence is TNNNSNNNDDNNNENNNNNNKKNNNNNNNNN. The interval 2032–2064 is disordered; sequence TNNNSNNNDDNNNENNNNNNKKNNNNNNNNNKS.

This sequence belongs to the helicase family.

It is found in the nucleus. The protein resides in the cytoplasm. The protein localises to the cytosol. The enzyme catalyses Couples ATP hydrolysis with the unwinding of duplex DNA by translocating in the 3'-5' direction.. It carries out the reaction ATP + H2O = ADP + phosphate + H(+). Functionally, ATPase involved both in DNA repair and rescue of stalled ribosomes. This chain is Activating signal cointegrator 1 complex subunit 3 (ascc3), found in Dictyostelium discoideum (Social amoeba).